Consider the following 276-residue polypeptide: uncharacterized protein (276 aa).

An AB hydrolase-1 domain is found at 20–137; it reads PVLIFIPGAN…PPINTFLPDS (118 aa).

It belongs to the AB hydrolase superfamily.

This is an uncharacterized protein from Staphylococcus aureus (strain MRSA252).